Reading from the N-terminus, the 448-residue chain is GTPase Der (448 aa).

2 consecutive EngA-type G domains span residues 3–167 and 182–355; these read PVIA…EPPE and TRLA…ASAT. GTP-binding positions include 9–16, 56–60, 119–122, 188–195, 235–239, and 300–303; these read GRPNVGKS, DTGGF, NKAE, DTAGL, and NKWD. The KH-like domain maps to 356–440; the sequence is RKLPTPQLTR…PMRIELRASH (85 aa).

It belongs to the TRAFAC class TrmE-Era-EngA-EngB-Septin-like GTPase superfamily. EngA (Der) GTPase family. Associates with the 50S ribosomal subunit.

Functionally, GTPase that plays an essential role in the late steps of ribosome biogenesis. In Leptothrix cholodnii (strain ATCC 51168 / LMG 8142 / SP-6) (Leptothrix discophora (strain SP-6)), this protein is GTPase Der.